Consider the following 182-residue polypeptide: ATP synthase subunit delta (182 aa).

The protein belongs to the ATPase delta chain family. As to quaternary structure, F-type ATPases have 2 components, F(1) - the catalytic core - and F(0) - the membrane proton channel. F(1) has five subunits: alpha(3), beta(3), gamma(1), delta(1), epsilon(1). CF(0) has four main subunits: a(1), b(1), b'(1) and c(10-14). The alpha and beta chains form an alternating ring which encloses part of the gamma chain. F(1) is attached to F(0) by a central stalk formed by the gamma and epsilon chains, while a peripheral stalk is formed by the delta, b and b' chains.

The protein localises to the cellular thylakoid membrane. In terms of biological role, f(1)F(0) ATP synthase produces ATP from ADP in the presence of a proton or sodium gradient. F-type ATPases consist of two structural domains, F(1) containing the extramembraneous catalytic core and F(0) containing the membrane proton channel, linked together by a central stalk and a peripheral stalk. During catalysis, ATP synthesis in the catalytic domain of F(1) is coupled via a rotary mechanism of the central stalk subunits to proton translocation. Functionally, this protein is part of the stalk that links CF(0) to CF(1). It either transmits conformational changes from CF(0) to CF(1) or is implicated in proton conduction. This chain is ATP synthase subunit delta, found in Parasynechococcus marenigrum (strain WH8102).